A 338-amino-acid chain; its full sequence is Methionine import ATP-binding protein MetN (338 aa).

In terms of domain architecture, ABC transporter spans 2 to 241 (ISLDGIRKVF…PKEHITKEFV (240 aa)). ATP is bound at residue 38–45 (GYSGAGKS).

This sequence belongs to the ABC transporter superfamily. Methionine importer (TC 3.A.1.24) family. As to quaternary structure, the complex is composed of two ATP-binding proteins (MetN), two transmembrane proteins (MetI) and a solute-binding protein (MetQ).

Its subcellular location is the cell membrane. It catalyses the reaction L-methionine(out) + ATP + H2O = L-methionine(in) + ADP + phosphate + H(+). It carries out the reaction D-methionine(out) + ATP + H2O = D-methionine(in) + ADP + phosphate + H(+). In terms of biological role, part of the ABC transporter complex MetNIQ involved in methionine import. Responsible for energy coupling to the transport system. In Halalkalibacterium halodurans (strain ATCC BAA-125 / DSM 18197 / FERM 7344 / JCM 9153 / C-125) (Bacillus halodurans), this protein is Methionine import ATP-binding protein MetN.